Consider the following 474-residue polypeptide: PTS system N-acetylmuramic acid-specific EIIBC component (474 aa).

A PTS EIIB type-1 domain is found at 1 to 89; the sequence is MAKEISSELL…SELLGEAPVQ (89 aa). The Cytoplasmic portion of the chain corresponds to 1–123; sequence MAKEISSELL…LAKFATIFTP (123 aa). Cysteine 29 acts as the Phosphocysteine intermediate; for EIIB activity in catalysis. Residues 115 to 474 form the PTS EIIC type-1 domain; sequence AKFATIFTPL…LFGCRNVNLD (360 aa). Residues 124–144 form a helical membrane-spanning segment; it reads LIPGFIAAGLLLGIATLIATV. Residues 145–157 lie on the Periplasmic side of the membrane; it reads MHVPADAQGTLPD. The helical transmembrane segment at 158–178 threads the bilayer; it reads ALNFMKVFSKGLFTFLVILVG. Over 179–180 the chain is Cytoplasmic; that stretch reads YN. Residues 181–201 traverse the membrane as a helical segment; that stretch reads AAQAFGGTGVNGAIIAALFLL. At 202–217 the chain is on the periplasmic side; it reads GYNPAATTGYYAGFHD. Residues 218–238 traverse the membrane as a helical segment; sequence FFGLPIDPRGNIIGVLIAAWA. The Cytoplasmic portion of the chain corresponds to 239–260; sequence CARIEGMVRRFMPDDLDMLLTS. The chain crosses the membrane as a helical span at residues 261–281; that stretch reads LITLLITATLAYLIIMPLGGW. At 282–301 the chain is on the periplasmic side; the sequence is LFEGMSWLFMHLNSNPFGCA. The chain crosses the membrane as a helical span at residues 302–322; sequence VLAGLFLIAVVFGVHQGFIPV. At 323–334 the chain is on the cytoplasmic side; it reads YLALMDSQGFNS. The helical transmembrane segment at 335 to 355 threads the bilayer; that stretch reads LFPILSMAGAGQVGAALALYW. Topologically, residues 356-368 are periplasmic; sequence RAQPHSALRSQVR. The helical transmembrane segment at 369–389 threads the bilayer; that stretch reads GAIIPGLLGVGEPLIYGVTLP. Topologically, residues 390-393 are cytoplasmic; the sequence is RMKP. A helical transmembrane segment spans residues 394–414; that stretch reads FVTACLGGAAGGLFIGLIAWW. Over 415 to 440 the chain is Periplasmic; it reads GLPMGLNSAFGPSGLVALPLMTSAQG. Residues 441–461 form a helical membrane-spanning segment; the sequence is ILPAMAVYAGGILVAWVCGFI. The Cytoplasmic portion of the chain corresponds to 462–474; sequence FTTLFGCRNVNLD.

Its subcellular location is the cell inner membrane. It catalyses the reaction N-acetyl-beta-D-muramate(out) + N(pros)-phospho-L-histidyl-[protein] = N-acetyl-beta-D-muramate 6-phosphate(in) + L-histidyl-[protein]. The phosphoenolpyruvate-dependent sugar phosphotransferase system (sugar PTS), a major carbohydrate active transport system, catalyzes the phosphorylation of incoming sugar substrates concomitantly with their translocation across the cell membrane. This system is involved in N-acetylmuramic acid (MurNAc) transport, yielding cytoplasmic MurNAc-6-P. Is responsible for growth on MurNAc as the sole source of carbon and energy. Is also able to take up anhydro-N-acetylmuramic acid (anhMurNAc), but cannot phosphorylate the carbon 6, probably because of the 1,6-anhydro ring. The sequence is that of PTS system N-acetylmuramic acid-specific EIIBC component (murP) from Escherichia coli (strain K12).